The sequence spans 349 residues: Selenide, water dikinase (349 aa).

The active site involves U19. Position 19 (U19) is a non-standard amino acid, selenocysteine. Residues K22 and L50–D52 contribute to the ATP site. A Mg(2+)-binding site is contributed by D53. ATP is bound by residues D69, D92, and G140–T142. A Mg(2+)-binding site is contributed by D92. D246 contributes to the Mg(2+) binding site.

This sequence belongs to the selenophosphate synthase 1 family. Class I subfamily. In terms of assembly, homodimer. It depends on Mg(2+) as a cofactor.

The catalysed reaction is hydrogenselenide + ATP + H2O = selenophosphate + AMP + phosphate + 2 H(+). Its function is as follows. Synthesizes selenophosphate from selenide and ATP. In Methanocaldococcus jannaschii (strain ATCC 43067 / DSM 2661 / JAL-1 / JCM 10045 / NBRC 100440) (Methanococcus jannaschii), this protein is Selenide, water dikinase.